A 350-amino-acid polypeptide reads, in one-letter code: Variable large protein 4 (350 aa).

Residues 1 to 18 (MRRRISAIIMTLFMVLVS) form the signal peptide. Residue C19 is the site of N-palmitoyl cysteine attachment. Residue C19 is the site of S-diacylglycerol cysteine attachment.

The protein belongs to the variable large protein (Vlp) family. Delta subfamily.

The protein localises to the cell outer membrane. Functionally, the Vlp and Vsp proteins are antigenically distinct proteins, only one vlp or vsp gene is transcriptionally active at any one time. Switching between these genes is a mechanism of host immune response evasion. This Borrelia hermsii protein is Variable large protein 4.